A 1134-amino-acid chain; its full sequence is Ubinuclein-1 (1134 aa).

Disordered stretches follow at residues 1–38 and 78–98; these read MSEP…HQDC and LQPG…EKER. Residues 1 to 166 are sufficient for interaction with HIRA; sequence MSEPHRVQFT…YGGFYINSGT (166 aa). Basic and acidic residues-rich tracts occupy residues 25–38 and 81–98; these read RKEE…HQDC and GDKK…EKER. Position 166 is a phosphothreonine (Thr-166). The tract at residues 171-220 is disordered; it reads QASESEDDFIKEKKKKSPKKRKLKEGGEKIKKKKKDDTYDKEKKSKKSKF. Phosphoserine occurs at positions 173 and 175. Over residues 182-193 the composition is skewed to basic residues; that stretch reads EKKKKSPKKRKL. A compositionally biased stretch (basic and acidic residues) spans 194–213; it reads KEGGEKIKKKKKDDTYDKEK. Lys-222 is modified (N6-acetyllysine). Residues 253-268 are compositionally biased toward basic and acidic residues; that stretch reads QKEKEAQKKREEEHKP. 4 disordered regions span residues 253-282, 321-358, 480-504, and 594-660; these read QKEK…LREL, SESP…EGLP, EEEK…KGGR, and PSKI…LEDS. Phosphoserine is present on residues Ser-323, Ser-336, Ser-338, and Ser-493. The stretch at 479-542 forms a coiled coil; the sequence is LEEEKDKEQR…SQDLERNNKA (64 aa). Basic and acidic residues-rich tracts occupy residues 480–493 and 598–610; these read EEEK…RICS and KVKE…DKKV. Residues Ser-660 and Ser-677 each carry the phosphoserine modification. Disordered regions lie at residues 712 to 836 and 852 to 986; these read TEEK…SPTQ and QGFH…GVAK. Low complexity-rich tracts occupy residues 792 to 804 and 856 to 891; these read GPQV…GPQV and PSAP…KPHS. The span at 892–905 shows a compositional bias: polar residues; it reads VSSAGSSYKNNPFA. A compositionally biased stretch (low complexity) spans 906–932; sequence SSISKHGVSSGSSSSGGTPVQSSVSGS. A compositionally biased stretch (polar residues) spans 941–950; that stretch reads SVGQATSRPV. Positions 973–982 are enriched in gly residues; the sequence is PNGDSSGGTQ. Ser-1025 carries the post-translational modification Phosphoserine. The span at 1093–1108 shows a compositional bias: low complexity; that stretch reads GLHSSPPHAAPLPHAA. The segment at 1093–1134 is disordered; that stretch reads GLHSSPPHAAPLPHAAVPTHIPQSLPGASQLHGKGPAVPRKL.

Belongs to the ubinuclein family. Component of a complex that includes at least ASF1A, CABIN1, HIRA, histone H3.3 and UBN1. Interacts with HIRA (via WD repeat domain); the interaction is direct. Interacts with ASF1A, CEBPA, TJP1, TJP2 and TJP3. As to quaternary structure, (Microbial infection) Interacts with Epstein-Barr virus BZLF1. In terms of tissue distribution, ubiquitous. Also expressed in numerous tumors and cancer cell lines.

Its subcellular location is the nucleus. It is found in the nucleoplasm. The protein resides in the PML body. It localises to the cell junction. The protein localises to the tight junction. Its function is as follows. Acts as a novel regulator of senescence. Involved in the formation of senescence-associated heterochromatin foci (SAHF), which represses expression of proliferation-promoting genes. Binds to proliferation-promoting genes. May be required for replication-independent chromatin assembly. The protein is Ubinuclein-1 (UBN1) of Homo sapiens (Human).